The following is a 660-amino-acid chain: Protein translocase subunit SecA 2 (660 aa).

ATP is bound by residues Gln113, 131–135 (GEGKT), and Asp539.

The protein belongs to the SecA family. In terms of assembly, monomer and homodimer. Part of the essential Sec protein translocation apparatus which comprises SecA, SecYEG and auxiliary proteins SecDF-YajC and YidC.

Its subcellular location is the cell inner membrane. It localises to the cytoplasm. The catalysed reaction is ATP + H2O + cellular proteinSide 1 = ADP + phosphate + cellular proteinSide 2.. Functionally, part of the Sec protein translocase complex. Interacts with the SecYEG preprotein conducting channel. Has a central role in coupling the hydrolysis of ATP to the transfer of proteins into and across the cell membrane, serving both as a receptor for the preprotein-SecB complex and as an ATP-driven molecular motor driving the stepwise translocation of polypeptide chains across the membrane. The sequence is that of Protein translocase subunit SecA 2 from Bordetella avium (strain 197N).